A 490-amino-acid polypeptide reads, in one-letter code: Probable glycine dehydrogenase (decarboxylating) subunit 2 (490 aa).

At Lys-273 the chain carries N6-(pyridoxal phosphate)lysine.

This sequence belongs to the GcvP family. C-terminal subunit subfamily. In terms of assembly, the glycine cleavage system is composed of four proteins: P, T, L and H. In this organism, the P 'protein' is a heterodimer of two subunits. Pyridoxal 5'-phosphate serves as cofactor.

The enzyme catalyses N(6)-[(R)-lipoyl]-L-lysyl-[glycine-cleavage complex H protein] + glycine + H(+) = N(6)-[(R)-S(8)-aminomethyldihydrolipoyl]-L-lysyl-[glycine-cleavage complex H protein] + CO2. Functionally, the glycine cleavage system catalyzes the degradation of glycine. The P protein binds the alpha-amino group of glycine through its pyridoxal phosphate cofactor; CO(2) is released and the remaining methylamine moiety is then transferred to the lipoamide cofactor of the H protein. The protein is Probable glycine dehydrogenase (decarboxylating) subunit 2 of Staphylococcus aureus (strain Mu50 / ATCC 700699).